The chain runs to 1236 residues: Complement factor H (1236 aa).

An N-terminal signal peptide occupies residues 1 to 18 (MRFPAKIVWLVLWTVCVA). Sushi domains lie at 19 to 82 (EDCK…ICRK), 83 to 143 (KPCA…ICEV), 144 to 207 (VKCL…KCVE), 208 to 264 (IFCK…TCIE), 265 to 322 (ITCD…RCAW), 325 to 383 (CSYP…EEPC), 385 to 442 (RQCI…RCIR), 444 to 505 (KTCS…VCIK), 507 to 562 (CDRP…KAAC), 565 to 623 (RECS…TCKV), 627 to 685 (KSCA…VCIE), 688 to 745 (RTCG…QCIA), 750 to 804 (RKCK…DCNE), 809 to 866 (QLCP…RCIE), 868 to 936 (IGCS…QCVG), 937 to 994 (LPCG…DCIS), 995 to 1053 (TNCV…ACRD), 1054 to 1111 (VSCG…QCKD), 1114 to 1172 (GKCG…KCLE), and 1173 to 1235 (ACVI…YPRC). 40 disulfide bridges follow: C21-C66, C52-C80, C85-C129, C114-C141, C146-C192, C178-C205, C210-C251, C237-C262, C267-C309, C294-C320, C325-C372, C355-C383, C387-C429, C414-C440, C446-C492, C475-C503, C507-C551, C534-C562, C567-C609, C595-C621, C629-C672, C658-C683, C690-C732, C718-C743, C752-C791, C780-C802, C811-C853, C839-C864, C870-C923, C909-C934, C939-C981, C967-C992, C997-C1040, C1026-C1051, C1056-C1098, C1084-C1109, C1116-C1159, C1145-C1170, C1174-C1225, and C1208-C1235. Residues Y168 and Y170 each carry the sulfotyrosine modification. Sulfotyrosine occurs at positions 465 and 473. Sulfotyrosine occurs at positions 575, 579, and 585. N775 is a glycosylation site (N-linked (GlcNAc...) asparagine). Residue N1100 is glycosylated (N-linked (GlcNAc...) asparagine).

Homodimer. Also forms homooligomers. Interacts with complement protein C3b; this interaction inhibits complement activation. Interacts with complement protein C3d. Interacts with CR3/ITGAM; this interaction mediates adhesion of neutrophils to pathogens leading to pathogen clearance. Sulfated on tyrosine residues. In terms of tissue distribution, CFH is one of the most abundant complement components in blood where the liver is the major source of CFH protein in vivo. in addition, CFH is secreted by additional cell types including monocytes, fibroblasts, or endothelial cells.

Its subcellular location is the secreted. Glycoprotein that plays an essential role in maintaining a well-balanced immune response by modulating complement activation. Acts as a soluble inhibitor of complement, where its binding to self markers such as glycan structures prevents complement activation and amplification on cell surfaces. Accelerates the decay of the complement alternative pathway (AP) C3 convertase C3bBb, thus preventing local formation of more C3b, the central player of the complement amplification loop. As a cofactor of the serine protease factor I, CFH also regulates proteolytic degradation of already-deposited C3b. In addition, mediates several cellular responses through interaction with specific receptors. For example, interacts with CR3/ITGAM receptor and thereby mediates the adhesion of human neutrophils to different pathogens. In turn, these pathogens are phagocytosed and destroyed. The sequence is that of Complement factor H (CFH) from Bos taurus (Bovine).